A 234-amino-acid polypeptide reads, in one-letter code: Endonuclease V (234 aa).

The Mg(2+) site is built by D42 and D108.

It belongs to the endonuclease V family. Mg(2+) serves as cofactor.

The protein resides in the cytoplasm. It catalyses the reaction Endonucleolytic cleavage at apurinic or apyrimidinic sites to products with a 5'-phosphate.. Functionally, DNA repair enzyme involved in the repair of deaminated bases. Selectively cleaves double-stranded DNA at the second phosphodiester bond 3' to a deoxyinosine leaving behind the intact lesion on the nicked DNA. The chain is Endonuclease V from Geotalea uraniireducens (strain Rf4) (Geobacter uraniireducens).